Reading from the N-terminus, the 721-residue chain is Penicillin-binding protein activator LpoA (721 aa).

The signal sequence occupies residues M1–G26. C27 is lipidated: N-palmitoyl cysteine. A lipid anchor (S-diacylglycerol cysteine) is attached at C27. Positions T316–M330 are enriched in polar residues. Positions T316–A393 are disordered. Residues Q331 to A393 show a composition bias toward low complexity.

Belongs to the LpoA family. Interacts with PBP1a.

The protein resides in the cell outer membrane. Regulator of peptidoglycan synthesis that is essential for the function of penicillin-binding protein 1A (PBP1a). This Enterobacter sp. (strain 638) protein is Penicillin-binding protein activator LpoA.